Reading from the N-terminus, the 57-residue chain is Large ribosomal subunit protein bL32 (57 aa).

This sequence belongs to the bacterial ribosomal protein bL32 family.

The polypeptide is Large ribosomal subunit protein bL32 (Staphylococcus saprophyticus subsp. saprophyticus (strain ATCC 15305 / DSM 20229 / NCIMB 8711 / NCTC 7292 / S-41)).